We begin with the raw amino-acid sequence, 130 residues long: Small ribosomal subunit protein uS11 (130 aa).

The protein belongs to the universal ribosomal protein uS11 family. Part of the 30S ribosomal subunit. Interacts with proteins S7 and S18. Binds to IF-3.

Located on the platform of the 30S subunit, it bridges several disparate RNA helices of the 16S rRNA. Forms part of the Shine-Dalgarno cleft in the 70S ribosome. The chain is Small ribosomal subunit protein uS11 from Gloeothece citriformis (strain PCC 7424) (Cyanothece sp. (strain PCC 7424)).